A 304-amino-acid polypeptide reads, in one-letter code: MSDLPLPPAFRQLGHSGIAVSPIAWGMWRLAENGRTPADAAKLVHAALDAGINFLDTADIYGFDGSAGFGDAEALLGEVLAAEPALRERMILATKGGILPPLPYDQSADYLRKAIDDSLARLKVDVIDLWQIHRPDILAHPYEVARVLDDAVSSGKVRALGVSNFTKDQIAALNHFLGEKLATTQPEISPLRIDCFENGELDQAMMLGLTPMAWSPLGGGRLASPQTARDKAVADALDAVAQAQGVSRTVAAYSWLMAHPAGIVPIIGSQQAARIAEGAEALKVRWNRQDWYAVLVAARGERLP.

Residues tryptophan 28, arginine 29, and aspartate 56 each contribute to the NADP(+) site. The Proton donor role is filled by tyrosine 61. Residues tyrosine 61, histidine 133, and arginine 134 each coordinate D-glucose. Residues serine 163, asparagine 164, glutamine 185, serine 215, leucine 217, glycine 219, glycine 268, serine 269, glutamine 270, and arginine 274 each coordinate NADP(+).

This sequence belongs to the aldo/keto reductase family.

The enzyme catalyses D-glucose + NADP(+) = 6-dehydro-D-glucose + NADPH + H(+). Part of the alkanesulfonate monooxygenase (sulfo-ASMO) pathway, a D-sulfoquinovose degradation pathway that enables the complete utilization of all carbons within sulfoquinovose (SQ) with concomitant production of inorganic sulfite. Catalyzes the NADP-dependent reduction of 6-dehydro-D-glucose to D-glucose. Can also catalyze the reversible reaction, the formation of 6-dehydro-D-glucose from D-glucose in the presence of NADP(+). The sequence is that of 6-dehydroglucose reductase from Novosphingobium aromaticivorans (strain ATCC 700278 / DSM 12444 / CCUG 56034 / CIP 105152 / NBRC 16084 / F199).